A 180-amino-acid polypeptide reads, in one-letter code: Transcriptional repressor NrdR (180 aa).

A zinc finger lies at 3–34; that stretch reads CPYCQNTSSRVLESRSTEAGQSIRRRRECLQC. An ATP-cone domain is found at 49–139; sequence ISVLKKDKSK…VYGEFKGITD (91 aa). The segment at 148–180 is disordered; the sequence is QQEERESSSSPEWSDAGEEATVIEDSSQVMASS. Residues 171–180 are compositionally biased toward polar residues; it reads EDSSQVMASS.

This sequence belongs to the NrdR family. Zn(2+) serves as cofactor.

Functionally, negatively regulates transcription of bacterial ribonucleotide reductase nrd genes and operons by binding to NrdR-boxes. The chain is Transcriptional repressor NrdR from Gloeothece citriformis (strain PCC 7424) (Cyanothece sp. (strain PCC 7424)).